Here is a 533-residue protein sequence, read N- to C-terminus: (E)-beta-farnesene synthase (533 aa).

Positions 286 and 290 each coordinate Mg(2+). Substrate contacts are provided by D286, D290, R427, and N430. The DDXXD motif signature appears at 286-290 (DDMMD). Residues N430 and E438 each contribute to the Mg(2+) site.

Belongs to the terpene synthase family. In terms of assembly, monomer. Mg(2+) is required as a cofactor. Mn(2+) serves as cofactor.

The protein resides in the cytoplasm. It catalyses the reaction (2E,6E)-farnesyl diphosphate = (E)-beta-farnesene + diphosphate. It carries out the reaction (2E,6E)-farnesyl diphosphate = alpha-copaene + diphosphate. The enzyme catalyses (2E,6E)-farnesyl diphosphate = (1S,5S,6R)-alpha-bergamotene + diphosphate. The catalysed reaction is (2E,6E)-farnesyl diphosphate = (-)-(E)-beta-caryophyllene + diphosphate. It catalyses the reaction (2E,6E)-farnesyl diphosphate = delta-cadinene + diphosphate. It carries out the reaction (2E,6E)-farnesyl diphosphate = (+)-germacrene D + diphosphate. The enzyme catalyses (2E,6E)-farnesyl diphosphate = alpha-zingiberene + diphosphate. The catalysed reaction is (2E,6E)-farnesyl diphosphate = alpha-muurolene + diphosphate. It catalyses the reaction (2E,6E)-farnesyl diphosphate = (S)-beta-bisabolene + diphosphate. It carries out the reaction (2E,6E)-farnesyl diphosphate = beta-sesquiphellandrene + diphosphate. The enzyme catalyses (2E,6E)-farnesyl diphosphate = sesquisabinene A + diphosphate. The protein operates within secondary metabolite biosynthesis; terpenoid biosynthesis. Sesquiterpene cyclase catalyzing mainly the production of beta-farnesene and alpha-bergamotene in equal amounts from farnesyl diphosphate. Also mediates the biosynthesis of minor sesquiterpene hydrocarbons including alpha-muurolene, beta-bisabolene, zingiberene, sesquiphellandrene, sesquisabinene A, germacrene D, delta-cadinene, alpha-copaene and (E)-beta-caryophyllene. Involved in indirect defense by producing volatile signals attracting natural enemies of herbivores. In Zea mays (Maize), this protein is (E)-beta-farnesene synthase.